A 327-amino-acid chain; its full sequence is 2-methoxy-6-polyprenyl-1,4-benzoquinol methylase, mitochondrial (327 aa).

Residues 1-43 constitute a mitochondrion transit peptide; sequence MAAPIRAFVLRVLSDSTRNIHHVLRCRSKYLCRRAAITARRGY. S-adenosyl-L-methionine-binding positions include T117, D171, and 199 to 200; that span reads DA.

It belongs to the class I-like SAM-binding methyltransferase superfamily. MenG/UbiE family. Component of a multi-subunit COQ enzyme complex, composed of at least coq3, coq4, coq5, coq6, coq7 and coq9.

It localises to the mitochondrion inner membrane. It carries out the reaction a 2-methoxy-6-(all-trans-polyprenyl)benzene-1,4-diol + S-adenosyl-L-methionine = a 5-methoxy-2-methyl-3-(all-trans-polyprenyl)benzene-1,4-diol + S-adenosyl-L-homocysteine + H(+). The protein operates within cofactor biosynthesis; ubiquinone biosynthesis. Its function is as follows. Methyltransferase required for the conversion of 2-polyprenyl-6-methoxy-1,4-benzoquinol (DDMQH2) to 2-polyprenyl-3-methyl-6-methoxy-1,4-benzoquinol (DMQH2). This Danio rerio (Zebrafish) protein is 2-methoxy-6-polyprenyl-1,4-benzoquinol methylase, mitochondrial.